Reading from the N-terminus, the 418-residue chain is Serine/threonine transporter SstT (418 aa).

8 consecutive transmembrane segments (helical) span residues 21-41 (ILIGLVAGIVLALVSTPAAIA), 49-69 (FVGALKAVAPVLVLMLVIASI), 83-103 (ILFLYVLGTFSAALVAVVVSF), 142-162 (ALLNANYIGILAWAVGLGIAL), 190-210 (FAPLGIFGLVASTIAATGFGA), 217-237 (LLVVLIGCMLLVALVVNPLIV), 299-319 (MAGAAITITVLTLAAVHTLGI), and 331-351 (VVAAICACGASGVAGGSLLLI).

Belongs to the dicarboxylate/amino acid:cation symporter (DAACS) (TC 2.A.23) family.

The protein localises to the cell inner membrane. It carries out the reaction L-serine(in) + Na(+)(in) = L-serine(out) + Na(+)(out). It catalyses the reaction L-threonine(in) + Na(+)(in) = L-threonine(out) + Na(+)(out). Its function is as follows. Involved in the import of serine and threonine into the cell, with the concomitant import of sodium (symport system). The sequence is that of Serine/threonine transporter SstT from Yersinia pestis bv. Antiqua (strain Antiqua).